A 366-amino-acid chain; its full sequence is UDP-N-acetylenolpyruvoylglucosamine reductase (366 aa).

The FAD-binding PCMH-type domain occupies 27–197 (LGGPAAGFVV…LRVRFLLRDG (171 aa)). Residue arginine 175 is part of the active site. Serine 252 (proton donor) is an active-site residue. The active site involves glutamate 358.

This sequence belongs to the MurB family. The cofactor is FAD.

The protein localises to the cytoplasm. The enzyme catalyses UDP-N-acetyl-alpha-D-muramate + NADP(+) = UDP-N-acetyl-3-O-(1-carboxyvinyl)-alpha-D-glucosamine + NADPH + H(+). Its pathway is cell wall biogenesis; peptidoglycan biosynthesis. In terms of biological role, cell wall formation. The sequence is that of UDP-N-acetylenolpyruvoylglucosamine reductase from Saccharopolyspora erythraea (strain ATCC 11635 / DSM 40517 / JCM 4748 / NBRC 13426 / NCIMB 8594 / NRRL 2338).